Here is a 431-residue protein sequence, read N- to C-terminus: MVNTMKTKLLCVLLLCGAVFSLPRQETYRQLARGSRAYGGCSELRCFNGGTCWQAASFSDFVCQCPKGYTGKQCEVDTHATCYKDQGVTYRGTWSTSESGAQCINWNSNLLTRRTYNGRRSDAITLGLGNHNYCRNPDNNSKPWCYVIKASKFILEFCSVPVCSKATCGLRKYKEPQLHSTGGLFTDITSHPWQAAIFAQNRRSSGERFLCGGILISSCWVLTAAHCFQERYPPQHLRVVLGRTYRVKPGKEEQTFEVEKCIIHEEFDDDTYNNDIALLQLKSGSPQCAQESDSVRAICLPEANLQLPDWTECELSGYGKHKSSSPFYSEQLKEGHVRLYPSSRCTSKFLFNKTVTNNMLCAGDTRSGEIYPNVHDACQGDSGGPLVCMNDNHMTLLGIISWGVGCGEKDIPGVYTKVTNYLGWIRDNMRP.

Residues methionine 1–arginine 36 form the signal peptide. The 39-residue stretch at alanine 37 to glutamate 75 folds into the EGF-like domain. 12 cysteine pairs are disulfide-bonded: cysteine 41/cysteine 52, cysteine 46/cysteine 63, cysteine 65/cysteine 74, cysteine 82/cysteine 163, cysteine 103/cysteine 145, cysteine 134/cysteine 158, cysteine 168/cysteine 299, cysteine 211/cysteine 227, cysteine 219/cysteine 288, cysteine 313/cysteine 388, cysteine 345/cysteine 361, and cysteine 378/cysteine 406. The 82-residue stretch at cysteine 82–cysteine 163 folds into the Kringle domain. N-linked (GlcNAc...) asparagine glycosylation occurs at asparagine 139. One can recognise a Peptidase S1 domain in the interval serine 180–arginine 430. Active-site charge relay system residues include histidine 226 and aspartate 275. Asparagine 352 carries an N-linked (GlcNAc...) asparagine glycan. Serine 382 (charge relay system) is an active-site residue.

Belongs to the peptidase S1 family. Monomer.

The protein localises to the secreted. The enzyme catalyses Specific cleavage of Arg-|-Val bond in plasminogen to form plasmin.. Functionally, probably essential to support the feeding habits of this exclusively haematophagous animal. Probable potent thrombolytic agent. This is Salivary plasminogen activator beta from Desmodus rotundus (Vampire bat).